A 249-amino-acid chain; its full sequence is Homeobox protein TGIF2LX (249 aa).

Basic and acidic residues predominate over residues 1–27 (MEAAADRPAETRSRVEKDSRRAKKDSP). 2 disordered regions span residues 1 to 60 (MEAA…KKKR) and 121 to 215 (QRRG…EPVS). Positions 28–46 (AKTQSPAQDTSIMLRSNAD) are enriched in polar residues. Residues 55–118 (EHKKKRKGYL…INARRRILPD (64 aa)) constitute a DNA-binding region (homeobox; TALE-type). Over residues 159–172 (DNVQSLPLRSSPKG) the composition is skewed to polar residues. Over residues 202–215 (VSNITSSSSPEPVS) the composition is skewed to low complexity.

It belongs to the TALE/TGIF homeobox family.

Its subcellular location is the nucleus. Its function is as follows. May have a transcription role in testis. The chain is Homeobox protein TGIF2LX (TGIF2LX) from Miopithecus talapoin (Angolan talapoin).